The following is a 497-amino-acid chain: Bifunctional protein GlmU (497 aa).

The tract at residues 1–241 (MSPETIGPAA…RWQVEGANDR (241 aa)) is pyrophosphorylase. UDP-N-acetyl-alpha-D-glucosamine contacts are provided by residues 14–17 (LAAG), Lys28, Gln81, 86–87 (GT), 112–114 (YGD), Gly151, Glu166, Asn181, and Asn239. Asp114 contributes to the Mg(2+) binding site. Residue Asn239 coordinates Mg(2+). The segment at 242–262 (IQLSALAAEHNRRIIESWMRA) is linker. The N-acetyltransferase stretch occupies residues 263–497 (GVTVVDPATT…QATIEEGKQA (235 aa)). Positions 344 and 362 each coordinate UDP-N-acetyl-alpha-D-glucosamine. His374 functions as the Proton acceptor in the catalytic mechanism. UDP-N-acetyl-alpha-D-glucosamine contacts are provided by Tyr377 and Asn388. Acetyl-CoA contacts are provided by residues 397–398 (NY), Ser416, and Ala434.

It in the N-terminal section; belongs to the N-acetylglucosamine-1-phosphate uridyltransferase family. This sequence in the C-terminal section; belongs to the transferase hexapeptide repeat family. In terms of assembly, homotrimer. It depends on Mg(2+) as a cofactor.

Its subcellular location is the cytoplasm. The enzyme catalyses alpha-D-glucosamine 1-phosphate + acetyl-CoA = N-acetyl-alpha-D-glucosamine 1-phosphate + CoA + H(+). It carries out the reaction N-acetyl-alpha-D-glucosamine 1-phosphate + UTP + H(+) = UDP-N-acetyl-alpha-D-glucosamine + diphosphate. It participates in nucleotide-sugar biosynthesis; UDP-N-acetyl-alpha-D-glucosamine biosynthesis; N-acetyl-alpha-D-glucosamine 1-phosphate from alpha-D-glucosamine 6-phosphate (route II): step 2/2. It functions in the pathway nucleotide-sugar biosynthesis; UDP-N-acetyl-alpha-D-glucosamine biosynthesis; UDP-N-acetyl-alpha-D-glucosamine from N-acetyl-alpha-D-glucosamine 1-phosphate: step 1/1. The protein operates within bacterial outer membrane biogenesis; LPS lipid A biosynthesis. In terms of biological role, catalyzes the last two sequential reactions in the de novo biosynthetic pathway for UDP-N-acetylglucosamine (UDP-GlcNAc). The C-terminal domain catalyzes the transfer of acetyl group from acetyl coenzyme A to glucosamine-1-phosphate (GlcN-1-P) to produce N-acetylglucosamine-1-phosphate (GlcNAc-1-P), which is converted into UDP-GlcNAc by the transfer of uridine 5-monophosphate (from uridine 5-triphosphate), a reaction catalyzed by the N-terminal domain. In Paenarthrobacter aurescens (strain TC1), this protein is Bifunctional protein GlmU.